Reading from the N-terminus, the 2594-residue chain is Protein sevenless (2594 aa).

Disordered regions lie at residues 1 to 34 (MFWR…PKRL) and 49 to 92 (KMST…RVRR). Topologically, residues 1-2141 (MFWREDAAQQ…FVSPEKRGSL (2141 aa)) are extracellular. A compositionally biased stretch (low complexity) spans 9-26 (QQQQQQQQQQQQQQQQQQ). 10 N-linked (GlcNAc...) asparagine glycosylation sites follow: Asn77, Asn401, Asn508, Asn532, Asn641, Asn667, Asn778, Asn797, Asn874, and Asn980. 2 Fibronectin type-III domains span residues 358-462 (ETTQ…TPME) and 468-560 (APII…SPLE). The Fibronectin type-III 3 domain occupies 838 to 938 (PPAPRELRAL…APLATRTWPL (101 aa)). The stretch at 1024–1066 (GLLYWTDLARDCVQRLDPFSGERELLPIFGARHLALDSAQGHL) is one LDL-receptor class B repeat. Fibronectin type-III domains are found at residues 1227–1317 (LAVP…QLDT) and 1324–1430 (QPRR…VQSV). 12 N-linked (GlcNAc...) asparagine glycosylation sites follow: Asn1257, Asn1344, Asn1382, Asn1577, Asn1587, Asn1665, Asn1752, Asn1776, Asn1824, Asn1908, Asn1966, and Asn2088. 4 Fibronectin type-III domains span residues 1711-1814 (TAAA…TLHT), 1821-1920 (APRN…SYAP), 1922-2010 (PPLQ…TLGD), and 2014-2132 (APGR…AEPF). A helical membrane pass occupies residues 2142–2162 (VLAIIAPAAIVSSCVLALVLV). Topologically, residues 2163–2594 (RKLQKRRHRA…LYANEGISGL (432 aa)) are cytoplasmic. A Protein kinase domain is found at 2224-2495 (LTLLRFLGSG…KRCLSTLQAL (272 aa)). ATP contacts are provided by residues 2230–2238 (LGSGAFGEV) and Lys2257. Asp2355 acts as the Proton acceptor in catalysis. At Tyr2391 the chain carries Phosphotyrosine; by autocatalysis. The tract at residues 2543–2568 (TVSTTDADTTGSPTTPTAPTTPTTTT) is disordered. The segment covering 2545–2568 (STTDADTTGSPTTPTAPTTPTTTT) has biased composition (low complexity).

It belongs to the protein kinase superfamily. Tyr protein kinase family. Insulin receptor subfamily.

It is found in the cell membrane. It catalyses the reaction L-tyrosyl-[protein] + ATP = O-phospho-L-tyrosyl-[protein] + ADP + H(+). Receptor for an extracellular signal required to instruct a cell to differentiate into a R7 photoreceptor. The ligand for Sev is the Boss (Bride of Sevenless) protein. The sequence is that of Protein sevenless (sev) from Drosophila virilis (Fruit fly).